An 80-amino-acid polypeptide reads, in one-letter code: Acyl carrier protein (80 aa).

The region spanning 4–79 is the Carrier domain; sequence ANVEQKVKNI…DAVNYITTHK (76 aa). Residue Ser39 is modified to O-(pantetheine 4'-phosphoryl)serine.

It belongs to the acyl carrier protein (ACP) family. 4'-phosphopantetheine is transferred from CoA to a specific serine of apo-ACP by AcpS. This modification is essential for activity because fatty acids are bound in thioester linkage to the sulfhydryl of the prosthetic group.

The protein localises to the cytoplasm. The protein operates within lipid metabolism; fatty acid biosynthesis. In terms of biological role, carrier of the growing fatty acid chain in fatty acid biosynthesis. The protein is Acyl carrier protein of Anaeromyxobacter sp. (strain Fw109-5).